The following is a 156-amino-acid chain: Small ribosomal subunit protein uS7 (156 aa).

Belongs to the universal ribosomal protein uS7 family. In terms of assembly, part of the 30S ribosomal subunit. Contacts proteins S9 and S11.

Its function is as follows. One of the primary rRNA binding proteins, it binds directly to 16S rRNA where it nucleates assembly of the head domain of the 30S subunit. Is located at the subunit interface close to the decoding center, probably blocks exit of the E-site tRNA. The polypeptide is Small ribosomal subunit protein uS7 (Xanthobacter autotrophicus (strain ATCC BAA-1158 / Py2)).